Consider the following 256-residue polypeptide: DNA repair protein RecO (256 aa).

The protein belongs to the RecO family.

In terms of biological role, involved in DNA repair and RecF pathway recombination. The sequence is that of DNA repair protein RecO from Desulforamulus reducens (strain ATCC BAA-1160 / DSM 100696 / MI-1) (Desulfotomaculum reducens).